The sequence spans 426 residues: NADH-quinone oxidoreductase subunit D 1 (426 aa).

A disordered region spans residues 1-51 (MATEFTVPDSAARIATAQQAGGGTPVRSGPPDEGGEFSGDRMSLSMGPSHP).

This sequence belongs to the complex I 49 kDa subunit family. NDH-1 is composed of 14 different subunits. Subunits NuoB, C, D, E, F, and G constitute the peripheral sector of the complex.

The protein localises to the cell inner membrane. It catalyses the reaction a quinone + NADH + 5 H(+)(in) = a quinol + NAD(+) + 4 H(+)(out). Its function is as follows. NDH-1 shuttles electrons from NADH, via FMN and iron-sulfur (Fe-S) centers, to quinones in the respiratory chain. The immediate electron acceptor for the enzyme in this species is believed to be ubiquinone. Couples the redox reaction to proton translocation (for every two electrons transferred, four hydrogen ions are translocated across the cytoplasmic membrane), and thus conserves the redox energy in a proton gradient. The protein is NADH-quinone oxidoreductase subunit D 1 of Opitutus terrae (strain DSM 11246 / JCM 15787 / PB90-1).